Consider the following 448-residue polypeptide: Glucose-6-phosphate isomerase (448 aa).

Glu-290 functions as the Proton donor in the catalytic mechanism. Residues His-311 and Lys-425 contribute to the active site.

Belongs to the GPI family.

The protein resides in the cytoplasm. It catalyses the reaction alpha-D-glucose 6-phosphate = beta-D-fructose 6-phosphate. It participates in carbohydrate biosynthesis; gluconeogenesis. Its pathway is carbohydrate degradation; glycolysis; D-glyceraldehyde 3-phosphate and glycerone phosphate from D-glucose: step 2/4. In terms of biological role, catalyzes the reversible isomerization of glucose-6-phosphate to fructose-6-phosphate. The sequence is that of Glucose-6-phosphate isomerase from Lactococcus lactis subsp. cremoris (strain SK11).